The sequence spans 430 residues: Protein IQ-DOMAIN 3 (430 aa).

Residues 1–36 form a disordered region; sequence MGKSWFSAVKKALSPEPKQKKEQKPHKSKKWFGKSK. The Nuclear localization signal 1 signature appears at 9-16; sequence VKKALSPE. Over residues 23–35 the composition is skewed to basic residues; the sequence is QKPHKSKKWFGKS. The 29-residue stretch at 107–135 folds into the IQ domain; that stretch reads EEIAAIKIQTAFRGYMARRALRALRGLVR. Positions 170-224 form a coiled coil; it reads RLRLSEDKQALTRQLQQKHNKDFDKTGENWNDSTLSREKVEANMLNKQVATMRRE. The interval 213 to 231 is calmodulin-binding; sequence MLNKQVATMRREKALAYAF. 2 disordered regions span residues 271-368 and 385-430; these read ENHS…SQSV and SNLS…TNLA. A compositionally biased stretch (low complexity) spans 286–295; it reads ARSVASRAMS. Polar residues predominate over residues 326–340; sequence SEDSNSIVSFQSEQP. The Nuclear localization signal 2 motif lies at 396–403; it reads AKKRLSFS.

Belongs to the IQD family. In terms of assembly, binds to multiple calmodulin (CaM) in the presence of Ca(2+) and CaM-like proteins.

It is found in the nucleus. The protein resides in the nucleolus. It localises to the cytoplasm. Its subcellular location is the cytoskeleton. Functionally, may be involved in cooperative interactions with calmodulins or calmodulin-like proteins. Recruits calmodulin proteins to microtubules, thus being a potential scaffold in cellular signaling and trafficking. May associate with nucleic acids and regulate gene expression at the transcriptional or post-transcriptional level. The protein is Protein IQ-DOMAIN 3 of Arabidopsis thaliana (Mouse-ear cress).